We begin with the raw amino-acid sequence, 565 residues long: MPTKTSTPSSQSPKLSHLRPQYIPNHIPDSSYVRILDTTLRDGEQSPGATMTAKEKLDIARQLVKLGVDIIQPGFPSASNSDFMAVKMIAQEVGNAVDDDGYVPVIAGFCRCVEKDISTAWEAVKYAKRPRLCTSIATSPIHMEHKLRKSKDQVIQIARDMVKFARSLGCNDIQFGAEDATRSDREFLYEILGVVIEAGATTVNIADTVGIVMPLELGKLIVDIKDNTPGIANVIISTHCHNDLGLATANTIEGARTGARQLEVTINGIGERAGNASLEEVVMALASKGDHALNGLYTRINTRHILETSKMVEEYSGMHLQPHKPLVGANAFVHASGIHQDGMLKHKGTYETISPEEIGHKRTTRIGIVLGKLSGSQALRKRLEELGYDLKEDEVDSVFWQFKAMAEKKKVVTDVDLKALVSYKAFHAESIWKLGDLQVTCGTIGLSTATVKLVNIDGSTHVACSIGIGAVDSTYKAINLIVKEPTKLLDYSLNSVTEGIGVNVTARVVICRENNHTSTYAFTEDANYPTFSGIAAEMDVVVSTVKAYLVALNKLLRWKESFRCA.

The segment covering 1 to 15 (MPTKTSTPSSQSPKL) has biased composition (low complexity). Residues 1-21 (MPTKTSTPSSQSPKLSHLRPQ) form a disordered region. One can recognise a Pyruvate carboxyltransferase domain in the interval 33–306 (VRILDTTLRD…YTRINTRHIL (274 aa)). Residues aspartate 42, histidine 239, histidine 241, and asparagine 275 each coordinate a divalent metal cation.

The protein belongs to the alpha-IPM synthase/homocitrate synthase family. LeuA type 1 subfamily. Homodimer. It depends on a divalent metal cation as a cofactor. As to expression, exclusively expressed in mature nodules.

It catalyses the reaction 3-methyl-2-oxobutanoate + acetyl-CoA + H2O = (2S)-2-isopropylmalate + CoA + H(+). Its function is as follows. Catalyzes the condensation of the acetyl group of acetyl-CoA with 3-methyl-2-oxobutanoate (2-oxoisovalerate) to form 3-carboxy-3-hydroxy-4-methylpentanoate (2-isopropylmalate). May play an important role in symbiotic nitrogen fixation. The protein is Probable 2-isopropylmalate synthase (GMN56) of Glycine max (Soybean).